The sequence spans 393 residues: D-alanyl-D-alanine carboxypeptidase DacA (393 aa).

The first 18 residues, 1-18 (MLKRTTKIAFLSSFVALS), serve as a signal peptide directing secretion. Ser65 acts as the Acyl-ester intermediate in catalysis. Lys68 functions as the Proton acceptor in the catalytic mechanism. Ser128 is a catalytic residue. Residue Lys231 coordinates substrate.

The protein belongs to the peptidase S11 family.

It localises to the cell inner membrane. The enzyme catalyses Preferential cleavage: (Ac)2-L-Lys-D-Ala-|-D-Ala. Also transpeptidation of peptidyl-alanyl moieties that are N-acyl substituents of D-alanine.. It functions in the pathway cell wall biogenesis; peptidoglycan biosynthesis. Functionally, removes C-terminal D-alanyl residues from sugar-peptide cell wall precursors. The chain is D-alanyl-D-alanine carboxypeptidase DacA (dacA) from Haemophilus influenzae (strain ATCC 51907 / DSM 11121 / KW20 / Rd).